We begin with the raw amino-acid sequence, 381 residues long: Dof zinc finger protein 2 (381 aa).

The disordered stretch occupies residues methionine 19 to asparagine 81. Composition is skewed to low complexity over residues alanine 23–asparagine 32 and serine 40–alanine 59. The segment covering threonine 68–alanine 79 has biased composition (basic and acidic residues). The Dof-type zinc-finger motif lies at leucine 80 to arginine 134. 4 residues coordinate Zn(2+): cysteine 82, cysteine 85, cysteine 107, and cysteine 110. Positions alanine 329–glycine 349 are disordered.

It localises to the nucleus. Transcription factor that may transactivate seed storage protein genes in developing seeds. This chain is Dof zinc finger protein 2, found in Oryza sativa subsp. japonica (Rice).